We begin with the raw amino-acid sequence, 326 residues long: ATP synthase gamma chain (326 aa).

It belongs to the ATPase gamma chain family. As to quaternary structure, F-type ATPases have 2 components, CF(1) - the catalytic core - and CF(0) - the membrane proton channel. CF(1) has five subunits: alpha(3), beta(3), gamma(1), delta(1), epsilon(1). CF(0) has three main subunits: a, b and c.

It is found in the cell membrane. Its function is as follows. Produces ATP from ADP in the presence of a proton gradient across the membrane. The gamma chain is believed to be important in regulating ATPase activity and the flow of protons through the CF(0) complex. This chain is ATP synthase gamma chain, found in Corynebacterium efficiens (strain DSM 44549 / YS-314 / AJ 12310 / JCM 11189 / NBRC 100395).